Here is a 256-residue protein sequence, read N- to C-terminus: 3-deoxy-manno-octulosonate cytidylyltransferase (256 aa).

This sequence belongs to the KdsB family.

It is found in the cytoplasm. The catalysed reaction is 3-deoxy-alpha-D-manno-oct-2-ulosonate + CTP = CMP-3-deoxy-beta-D-manno-octulosonate + diphosphate. Its pathway is nucleotide-sugar biosynthesis; CMP-3-deoxy-D-manno-octulosonate biosynthesis; CMP-3-deoxy-D-manno-octulosonate from 3-deoxy-D-manno-octulosonate and CTP: step 1/1. The protein operates within bacterial outer membrane biogenesis; lipopolysaccharide biosynthesis. Functionally, activates KDO (a required 8-carbon sugar) for incorporation into bacterial lipopolysaccharide in Gram-negative bacteria. The polypeptide is 3-deoxy-manno-octulosonate cytidylyltransferase (Histophilus somni (strain 129Pt) (Haemophilus somnus)).